The chain runs to 2894 residues: Bifunctional DNA-directed RNA polymerase subunit beta-beta' (2894 aa).

The segment at Met-1–Asp-1378 is DNA-directed RNA polymerase subunit beta. The DNA-directed RNA polymerase subunit beta' stretch occupies residues Pro-1385 to Glu-2894. Positions 1450, 1452, 1465, and 1468 each coordinate Zn(2+). Mg(2+) contacts are provided by Asp-1849, Asp-1851, and Asp-1853. Positions 2179, 2253, 2260, and 2263 each coordinate Zn(2+).

This sequence in the N-terminal section; belongs to the RNA polymerase beta chain family. It in the C-terminal section; belongs to the RNA polymerase beta' chain family. The RNAP catalytic core consists of 2 alpha, 1 beta/beta' and 1 omega subunit. When a sigma factor is associated with the core the holoenzyme is formed, which can initiate transcription. Requires Mg(2+) as cofactor. It depends on Zn(2+) as a cofactor.

The enzyme catalyses RNA(n) + a ribonucleoside 5'-triphosphate = RNA(n+1) + diphosphate. Functionally, DNA-dependent RNA polymerase catalyzes the transcription of DNA into RNA using the four ribonucleoside triphosphates as substrates. In Helicobacter hepaticus (strain ATCC 51449 / 3B1), this protein is Bifunctional DNA-directed RNA polymerase subunit beta-beta' (rpoBC).